The following is a 472-amino-acid chain: Arginine biosynthesis bifunctional protein ArgJ, mitochondrial (472 aa).

Residues T200, K229, T240, E327, N467, and T472 each coordinate substrate. T240 (nucleophile) is an active-site residue.

It belongs to the ArgJ family. In terms of assembly, heterodimer of an alpha and a beta chain. The alpha and beta chains are autoproteolytically processed from a single precursor protein within the mitochondrion.

The protein resides in the mitochondrion matrix. It catalyses the reaction N(2)-acetyl-L-ornithine + L-glutamate = N-acetyl-L-glutamate + L-ornithine. It carries out the reaction L-glutamate + acetyl-CoA = N-acetyl-L-glutamate + CoA + H(+). It functions in the pathway amino-acid biosynthesis; L-arginine biosynthesis; L-ornithine and N-acetyl-L-glutamate from L-glutamate and N(2)-acetyl-L-ornithine (cyclic): step 1/1. The protein operates within amino-acid biosynthesis; L-arginine biosynthesis; N(2)-acetyl-L-ornithine from L-glutamate: step 1/4. In terms of biological role, catalyzes two activities which are involved in the cyclic version of arginine biosynthesis: the synthesis of acetylglutamate from glutamate and acetyl-CoA, and of ornithine by transacetylation between acetylornithine and glutamate. This chain is Arginine biosynthesis bifunctional protein ArgJ, mitochondrial, found in Talaromyces marneffei (strain ATCC 18224 / CBS 334.59 / QM 7333) (Penicillium marneffei).